A 371-amino-acid polypeptide reads, in one-letter code: MVIGRHRNTRAIISLEAIKHNVATQISKLKDGQSLFAVVKANAYGHGMIPVAKAAKEAGANGFCVAIIDEGIALRESGIKDPILILGVNPASEAVCMAKHDLSVAVGTLEFLTEAQKLLQEEKQRLKIHLALDTGMGRIGFRNTEDLKEAVDFIEKHSDQLKCEGVFTHFSTADSKDPAYFEKQSQKFDELVGVLKKKPKYIHQANSATALWHPNFEGNLVRMGISMYGLNPSGDMIDETWNLEPALSLESELVAVKEVEAGSSIGYGATYTSSQSEWIGTVPIGYADGWLRRMQGFKVLIDGQYCEIVGRVCMDQFMVRLPKKYDLGTKVTLIGENNGKVITAQDVANYADTIHYEIMCNITERVPRIYK.

Residue K40 is the Proton acceptor; specific for D-alanine of the active site. Position 40 is an N6-(pyridoxal phosphate)lysine (K40). R138 is a substrate binding site. Y267 acts as the Proton acceptor; specific for L-alanine in catalysis. M314 lines the substrate pocket.

Belongs to the alanine racemase family. It depends on pyridoxal 5'-phosphate as a cofactor.

It carries out the reaction L-alanine = D-alanine. It participates in amino-acid biosynthesis; D-alanine biosynthesis; D-alanine from L-alanine: step 1/1. Its function is as follows. Catalyzes the interconversion of L-alanine and D-alanine. May also act on other amino acids. This Ligilactobacillus salivarius (strain UCC118) (Lactobacillus salivarius) protein is Alanine racemase (alr).